A 154-amino-acid chain; its full sequence is Superoxide dismutase [Cu-Zn] (154 aa).

His-47, His-49, and His-64 together coordinate Cu cation. A disulfide bridge connects residues Cys-58 and Cys-147. The Zn(2+) site is built by His-64, His-72, His-81, and Asp-84. Position 121 (His-121) interacts with Cu cation.

Belongs to the Cu-Zn superoxide dismutase family. As to quaternary structure, homodimer. It depends on Cu cation as a cofactor. Zn(2+) is required as a cofactor.

The protein localises to the cytoplasm. The catalysed reaction is 2 superoxide + 2 H(+) = H2O2 + O2. Destroys radicals which are normally produced within the cells and which are toxic to biological systems. The sequence is that of Superoxide dismutase [Cu-Zn] (SODCC) from Pinus sylvestris (Scotch pine).